Consider the following 544-residue polypeptide: MAKEIKFSEEARRAMLRGVDALADAVKVTLGPKGRNVVLEKKFGSPLITNDGVTIAKEIELEDAFENMGAKLVAEVASKTNDVAGDGTTTATVLAQAMIREGLKNVTAGANPVGVRKGMEQAVAVAIENLKEISKPIEGKESIAQVAAISAADEEVGSLIAEAMERVGNDGVITIEESKGFTTELEVVEGMQFDRGYASPYMVTDSDKMEAVLDNPYILITDKKITNIQEILPVLEQVVQQGKPLLLIAEDVEGEALATLVVNKLRGTFNAVAVKAPGFGDRRKAMLEDIAVLTGGEVITEDLGLDLKSTQIAQLGRASKVVVTKENTTIVEGAGETDKISARVTQIRAQVEETTSEFDREKLQERLAKLAGGVAVIKVGAATETELKERKLRIEDALNSTRAAVEEGIVSGGGTALVNVYNKVAAVEAEGDAQTGINIVLRALEEPIRQIAHNAGLEGSVIVERLKNEEIGVGFNAATGEWVNMIEKGIVDPTKVTRSALQNAASVAAMFLTTEAVVADKPEENGGGAGMPDMGGMGGMGGMM.

ATP is bound by residues 29 to 32 (TLGP), 86 to 90 (DGTTT), Gly-413, 476 to 478 (NAA), and Asp-492.

The protein belongs to the chaperonin (HSP60) family. In terms of assembly, forms a cylinder of 14 subunits composed of two heptameric rings stacked back-to-back. Interacts with the co-chaperonin GroES.

Its subcellular location is the cytoplasm. It localises to the secreted. The enzyme catalyses ATP + H2O + a folded polypeptide = ADP + phosphate + an unfolded polypeptide.. Together with its co-chaperonin GroES, plays an essential role in assisting protein folding. The GroEL-GroES system forms a nano-cage that allows encapsulation of the non-native substrate proteins and provides a physical environment optimized to promote and accelerate protein folding. This is Chaperonin GroEL from Bacillus subtilis (strain 168).